A 625-amino-acid chain; its full sequence is 1-deoxy-D-xylulose-5-phosphate synthase (625 aa).

Thiamine diphosphate contacts are provided by residues His-80 and 121–123; that span reads GHS. A Mg(2+)-binding site is contributed by Asp-152. Thiamine diphosphate-binding positions include 153-154, Asn-181, Tyr-290, and Glu-371; that span reads GA. Asn-181 provides a ligand contact to Mg(2+).

The protein belongs to the transketolase family. DXPS subfamily. In terms of assembly, homodimer. Mg(2+) is required as a cofactor. Thiamine diphosphate serves as cofactor.

It carries out the reaction D-glyceraldehyde 3-phosphate + pyruvate + H(+) = 1-deoxy-D-xylulose 5-phosphate + CO2. The protein operates within metabolic intermediate biosynthesis; 1-deoxy-D-xylulose 5-phosphate biosynthesis; 1-deoxy-D-xylulose 5-phosphate from D-glyceraldehyde 3-phosphate and pyruvate: step 1/1. Catalyzes the acyloin condensation reaction between C atoms 2 and 3 of pyruvate and glyceraldehyde 3-phosphate to yield 1-deoxy-D-xylulose-5-phosphate (DXP). The chain is 1-deoxy-D-xylulose-5-phosphate synthase from Haemophilus influenzae (strain 86-028NP).